Here is a 373-residue protein sequence, read N- to C-terminus: Histidinol-phosphate aminotransferase (373 aa).

K229 carries the N6-(pyridoxal phosphate)lysine modification.

This sequence belongs to the class-II pyridoxal-phosphate-dependent aminotransferase family. Histidinol-phosphate aminotransferase subfamily. Requires pyridoxal 5'-phosphate as cofactor.

The enzyme catalyses L-histidinol phosphate + 2-oxoglutarate = 3-(imidazol-4-yl)-2-oxopropyl phosphate + L-glutamate. It participates in amino-acid biosynthesis; L-histidine biosynthesis; L-histidine from 5-phospho-alpha-D-ribose 1-diphosphate: step 7/9. The protein is Histidinol-phosphate aminotransferase (hisC) of Methanothermobacter thermautotrophicus (strain ATCC 29096 / DSM 1053 / JCM 10044 / NBRC 100330 / Delta H) (Methanobacterium thermoautotrophicum).